The primary structure comprises 498 residues: Ribosomal RNA small subunit methyltransferase G 2 (498 aa).

The methyltransferase G stretch occupies residues 1–230 (MRNGTIRYPG…FQRLGPPTRI (230 aa)). Residues G89, M94, and R154 each contribute to the S-adenosyl-L-methionine site. The methyltransferase TrmH family stretch occupies residues 231-498 (RKETAMKRHG…SQTKHSPAPA (268 aa)).

In the N-terminal section; belongs to the methyltransferase superfamily. RNA methyltransferase RsmG family. This sequence in the C-terminal section; belongs to the class IV-like SAM-binding methyltransferase superfamily. RNA methyltransferase TrmH family.

It is found in the cytoplasm. It catalyses the reaction guanosine(527) in 16S rRNA + S-adenosyl-L-methionine = N(7)-methylguanosine(527) in 16S rRNA + S-adenosyl-L-homocysteine. Its function is as follows. Specifically methylates the N7 position of guanine in position 527 of 16S rRNA. The sequence is that of Ribosomal RNA small subunit methyltransferase G 2 (rsmG2) from Syntrophobacter fumaroxidans (strain DSM 10017 / MPOB).